The following is a 424-amino-acid chain: Dihydrolipoyllysine-residue succinyltransferase component of 2-oxoglutarate dehydrogenase complex (424 aa).

The region spanning 1–76 is the Lipoyl-binding domain; the sequence is MPEVKVPELA…EVGQAIAVVG (76 aa). N6-lipoyllysine is present on K42. Disordered regions lie at residues 76–138 and 155–204; these read GEGS…KYAR and VRKE…RKKT. The segment covering 91 to 105 has biased composition (basic and acidic residues); that stretch reads EAPKQETETSTDDKS. Positions 122–131 are enriched in polar residues; sequence DNNQRVNATP. One can recognise a Peripheral subunit-binding (PSBD) domain in the interval 128–164; sequence NATPSARKYAREKGIDLSEIAAASNDVVRKEHVDQSQ. Over residues 162–176 the composition is skewed to low complexity; the sequence is QSQTQTSTQQQAQPA. Active-site residues include H395 and D399.

It belongs to the 2-oxoacid dehydrogenase family. Forms a 24-polypeptide structural core with octahedral symmetry. Part of the 2-oxoglutarate dehydrogenase (OGDH) complex composed of E1 (2-oxoglutarate dehydrogenase), E2 (dihydrolipoamide succinyltransferase) and E3 (dihydrolipoamide dehydrogenase); the complex contains multiple copies of the three enzymatic components (E1, E2 and E3). The cofactor is (R)-lipoate.

It carries out the reaction N(6)-[(R)-dihydrolipoyl]-L-lysyl-[protein] + succinyl-CoA = N(6)-[(R)-S(8)-succinyldihydrolipoyl]-L-lysyl-[protein] + CoA. It participates in amino-acid degradation; L-lysine degradation via saccharopine pathway; glutaryl-CoA from L-lysine: step 6/6. Functionally, E2 component of the 2-oxoglutarate dehydrogenase (OGDH) complex which catalyzes the second step in the conversion of 2-oxoglutarate to succinyl-CoA and CO(2). This Staphylococcus saprophyticus subsp. saprophyticus (strain ATCC 15305 / DSM 20229 / NCIMB 8711 / NCTC 7292 / S-41) protein is Dihydrolipoyllysine-residue succinyltransferase component of 2-oxoglutarate dehydrogenase complex (odhB).